Reading from the N-terminus, the 467-residue chain is MSTTAVFIPPQIMVTSNVEKVPISIITHSSDSNFIAYRLNNKLNIFDNKLNKLGELESGSQHTGIIRSIEFTKNNQSLITSSSDKFLKIWDTTNNFKNIKSINTNKKIICSILNKDDSEILVSDKCGDVFKYSLIDDSKNKIEVSGDKSAKHDEKESDKNLVFGHYSSIVDIKFSPCFNYLLSADRDEKIRVSHYPNCFDIESFCLGHTKYVTEILLVPGRDDLLISGSGDGTIKLWNWKQGKCLQTVDFNSKHENAITIPQVVFKVDATTTTNQLIFSIENSNNIYILPMNVEKGEFNQSELKTIPLTQSSPISIDLIDNGKTILASLLPTTKEVDVAIAFDSTTLSQQSDNKVVIAINSVDASTTLKPAELKSVLESIEKKQYRKHVSYSKQMMNSTDNKNKEDDDLSLDEQDIDDTTDINNNNKNKNQETIQDSRPLKLRKMTIEGDKEIQKELEEKESKKQEE.

WD repeat units lie at residues 61-100 (QHTGIIRSIEFTKNNQSLITSSSDKFLKIWDTTNNFKNIK), 164-203 (GHYSSIVDIKFSPCFNYLLSADRDEKIRVSHYPNCFDIES), and 207-249 (GHTK…QTVD). Positions 415-467 (DIDDTTDINNNNKNKNQETIQDSRPLKLRKMTIEGDKEIQKELEEKESKKQEE) are disordered. Residues 421–434 (DINNNNKNKNQETI) show a composition bias toward low complexity. Residues 445–467 (MTIEGDKEIQKELEEKESKKQEE) show a composition bias toward basic and acidic residues.

The protein belongs to the WD repeat TRM82 family. As to quaternary structure, forms a heterodimer with the catalytic subunit mettl1.

The protein localises to the nucleus. Its pathway is tRNA modification; N(7)-methylguanine-tRNA biosynthesis. In terms of biological role, required for the formation of N(7)-methylguanine at position 46 (m7G46) in tRNA. In the complex, it is required to stabilize and induce conformational changes of the catalytic subunit. This Dictyostelium discoideum (Social amoeba) protein is tRNA (guanine-N(7)-)-methyltransferase non-catalytic subunit wdr4 (wdr4).